We begin with the raw amino-acid sequence, 91 residues long: Cell division topological specificity factor (91 aa).

It belongs to the MinE family.

In terms of biological role, prevents the cell division inhibition by proteins MinC and MinD at internal division sites while permitting inhibition at polar sites. This ensures cell division at the proper site by restricting the formation of a division septum at the midpoint of the long axis of the cell. The sequence is that of Cell division topological specificity factor from Wigglesworthia glossinidia brevipalpis.